The following is a 292-amino-acid chain: tRNA (guanine-N(7)-)-methyltransferase (292 aa).

A disordered region spans residues 1-52 (MGKIEATSKEEKLRVQKEAEARRRAYRDLKKEARQMQKEVKFDTDDNSELPK). S-adenosyl-L-methionine-binding positions include Gly-106, 129–130 (EI), 166–167 (NA), and Cys-186. The active site involves Asp-189. Position 264-266 (264-266 (TEE)) interacts with S-adenosyl-L-methionine.

The protein belongs to the class I-like SAM-binding methyltransferase superfamily. TrmB family. Forms a complex with TRM82.

The protein resides in the nucleus. It catalyses the reaction guanosine(46) in tRNA + S-adenosyl-L-methionine = N(7)-methylguanosine(46) in tRNA + S-adenosyl-L-homocysteine. Its pathway is tRNA modification; N(7)-methylguanine-tRNA biosynthesis. Its function is as follows. Catalyzes the formation of N(7)-methylguanine at position 46 (m7G46) in tRNA. The sequence is that of tRNA (guanine-N(7)-)-methyltransferase from Debaryomyces hansenii (strain ATCC 36239 / CBS 767 / BCRC 21394 / JCM 1990 / NBRC 0083 / IGC 2968) (Yeast).